Reading from the N-terminus, the 490-residue chain is Transmembrane protease serine 2 (490 aa).

Topologically, residues Met-1–Ser-83 are cytoplasmic. A helical; Signal-anchor for type II membrane protein membrane pass occupies residues Leu-84–Leu-104. Residues Trp-105–Ser-490 are Extracellular-facing. A glycan (N-linked (GlcNAc...) asparagine) is linked at Asn-111. The 39-residue stretch at Asn-111–Arg-149 folds into the LDL-receptor class A domain. 9 disulfides stabilise this stretch: Cys-112–Cys-125, Cys-119–Cys-138, Cys-132–Cys-147, Cys-171–Cys-230, Cys-184–Cys-240, Cys-243–Cys-363, Cys-279–Cys-295, Cys-408–Cys-424, and Cys-435–Cys-463. Residues Asp-133, Val-135, Asp-143, and Glu-144 each coordinate Ca(2+). The SRCR domain maps to Leu-150–Glu-242. Asn-212 carries N-linked (GlcNAc...) asparagine glycosylation. The 234-residue stretch at Ile-254 to Arg-487 folds into the Peptidase S1 domain. Catalysis depends on charge relay system residues His-294 and Asp-343. Catalysis depends on Ser-439, which acts as the Charge relay system. Residue Asn-474 is glycosylated (N-linked (GlcNAc...) asparagine).

It belongs to the peptidase S1 family. The catalytically active form interacts with ACE2. In terms of processing, proteolytically processed; by an autocatalytic mechanism. Autocleavage induces active conformation. Larynx, trachea and bronchi, lung, prostate and kidney.

The protein resides in the cell membrane. It is found in the secreted. It catalyses the reaction The enzyme cleaves angiotensin-converting enzyme 2 (EC 3.4.17.23) and cleaves influenzea A and B virus and coronavirus spike glycoproteins at arginine residues.. Functionally, plasma membrane-anchored serine protease that cleaves at arginine residues. Participates in proteolytic cascades of relevance for the normal physiologic function of the prostate. Androgen-induced TMPRSS2 activates several substrates that include pro-hepatocyte growth factor/HGF, the protease activated receptor-2/F2RL1 or matriptase/ST14 leading to extracellular matrix disruption. In addition, activates trigeminal neurons and contribute to both spontaneous pain and mechanical allodynia. In terms of biological role, (Microbial infection) Essential for spread and pathogenesis of influenza A virus (strains H1N1, H3N2 and H7N9) and is involved in proteolytic cleavage and activation of hemagglutinin (HA) protein which is essential for viral infectivity. The chain is Transmembrane protease serine 2 (Tmprss2) from Mus musculus (Mouse).